The chain runs to 141 residues: Hemoglobin subunit alpha (141 aa).

Positions 1 to 141 (VLSPADKTNV…VSTVLTSKYR (141 aa)) constitute a Globin domain. S3 is modified (phosphoserine). K7 carries the N6-succinyllysine modification. The residue at position 8 (T8) is a Phosphothreonine. K11 carries the N6-succinyllysine modification. K16 carries the N6-acetyllysine; alternate modification. An N6-succinyllysine; alternate modification is found at K16. Y24 bears the Phosphotyrosine mark. S35 bears the Phosphoserine mark. K40 is modified (N6-succinyllysine). S49 bears the Phosphoserine mark. Position 58 (H58) interacts with O2. H87 contacts heme b. S102 is modified (phosphoserine). T108 carries the post-translational modification Phosphothreonine. 2 positions are modified to phosphoserine: S124 and S131. 2 positions are modified to phosphothreonine: T134 and T137. Phosphoserine is present on S138.

Belongs to the globin family. Heterotetramer of two alpha chains and two beta chains. In terms of tissue distribution, red blood cells.

Involved in oxygen transport from the lung to the various peripheral tissues. Its function is as follows. Hemopressin acts as an antagonist peptide of the cannabinoid receptor CNR1. Hemopressin-binding efficiently blocks cannabinoid receptor CNR1 and subsequent signaling. The polypeptide is Hemoglobin subunit alpha (HBA) (Taphozous georgianus (Sharp-nosed tomb bat)).